The following is an 85-amino-acid chain: uncharacterized protein (85 aa).

This is an uncharacterized protein from Saimiriine herpesvirus 2 (strain 488) (SaHV-2).